The primary structure comprises 195 residues: UMP-CMP kinase (195 aa).

17–22 (GSGKGT) is a binding site for ATP. Positions 37–66 (SAGDLLRQEQQSGSKDGEMIATMIKNGEIV) are NMP. A ribonucleoside 5'-phosphate is bound by residues arginine 43, 64-66 (EIV), and 91-94 (GFPR). Position 98 (asparagine 98) interacts with CMP. The interval 131–141 (KRGESSGRSDD) is LID. Arginine 132 is a binding site for ATP. Arginine 138 and arginine 149 together coordinate a ribonucleoside 5'-phosphate. Arginine 177 provides a ligand contact to ATP.

Belongs to the adenylate kinase family. UMP-CMP kinase subfamily. Monomer. Mg(2+) is required as a cofactor.

It localises to the cytoplasm. It is found in the nucleus. The enzyme catalyses CMP + ATP = CDP + ADP. It catalyses the reaction dCMP + ATP = dCDP + ADP. It carries out the reaction UMP + ATP = UDP + ADP. Functionally, catalyzes the phosphorylation of pyrimidine nucleoside monophosphates at the expense of ATP. Plays an important role in de novo pyrimidine nucleotide biosynthesis. Has preference for UMP and CMP as phosphate acceptors. This Dictyostelium discoideum (Social amoeba) protein is UMP-CMP kinase.